Reading from the N-terminus, the 294-residue chain is Probable enoyl-CoA hydratase 2 (294 aa).

Residues 84-85, K113, 190-195, G213, and F243 contribute to the (3R)-3-hydroxydecanoyl-CoA site; these read HG and DLNPLH. A MaoC-like domain is found at 165 to 269; the sequence is DRAPDAISKQ…INPTTILFQS (105 aa). Positions 292–294 match the Microbody targeting signal motif; that stretch reads GSL.

Belongs to the short-chain dehydrogenases/reductases (SDR) family.

It is found in the peroxisome. It catalyses the reaction a (3R)-3-hydroxyacyl-CoA = a (2E)-enoyl-CoA + H2O. The chain is Probable enoyl-CoA hydratase 2 (mfeB) from Dictyostelium discoideum (Social amoeba).